We begin with the raw amino-acid sequence, 278 residues long: Large ribosomal subunit protein uL2 (278 aa).

Disordered regions lie at residues 32–54 and 221–278; these read SLCRPLKKSGGRNNNGRITTRHI and RGMT…RNAK. The segment covering 232 to 245 has biased composition (gly residues); the sequence is NGGGEGKSKSGGGR.

This sequence belongs to the universal ribosomal protein uL2 family. As to quaternary structure, part of the 50S ribosomal subunit. Forms a bridge to the 30S subunit in the 70S ribosome.

Functionally, one of the primary rRNA binding proteins. Required for association of the 30S and 50S subunits to form the 70S ribosome, for tRNA binding and peptide bond formation. It has been suggested to have peptidyltransferase activity; this is somewhat controversial. Makes several contacts with the 16S rRNA in the 70S ribosome. The protein is Large ribosomal subunit protein uL2 of Akkermansia muciniphila (strain ATCC BAA-835 / DSM 22959 / JCM 33894 / BCRC 81048 / CCUG 64013 / CIP 107961 / Muc).